The following is a 284-amino-acid chain: Probable endonuclease 4 (284 aa).

Zn(2+) contacts are provided by histidine 69, histidine 109, glutamate 145, aspartate 179, histidine 182, histidine 216, aspartate 229, histidine 231, and glutamate 261.

It belongs to the AP endonuclease 2 family. Zn(2+) is required as a cofactor.

It catalyses the reaction Endonucleolytic cleavage to 5'-phosphooligonucleotide end-products.. Its function is as follows. Endonuclease IV plays a role in DNA repair. It cleaves phosphodiester bonds at apurinic or apyrimidinic (AP) sites, generating a 3'-hydroxyl group and a 5'-terminal sugar phosphate. This Klebsiella pneumoniae subsp. pneumoniae (strain ATCC 700721 / MGH 78578) protein is Probable endonuclease 4.